Here is a 271-residue protein sequence, read N- to C-terminus: Phosphatidylglycerol--prolipoprotein diacylglyceryl transferase (271 aa).

The next 7 helical transmembrane spans lie at Ile-21–Ala-41, Leu-60–Tyr-80, Val-95–Trp-115, Phe-124–Leu-144, Ser-176–Ile-196, Gly-203–Val-223, and Leu-230–Gly-250. Residue Arg-143 participates in a 1,2-diacyl-sn-glycero-3-phospho-(1'-sn-glycerol) binding.

It belongs to the Lgt family.

It is found in the cell inner membrane. The enzyme catalyses L-cysteinyl-[prolipoprotein] + a 1,2-diacyl-sn-glycero-3-phospho-(1'-sn-glycerol) = an S-1,2-diacyl-sn-glyceryl-L-cysteinyl-[prolipoprotein] + sn-glycerol 1-phosphate + H(+). It participates in protein modification; lipoprotein biosynthesis (diacylglyceryl transfer). Catalyzes the transfer of the diacylglyceryl group from phosphatidylglycerol to the sulfhydryl group of the N-terminal cysteine of a prolipoprotein, the first step in the formation of mature lipoproteins. The protein is Phosphatidylglycerol--prolipoprotein diacylglyceryl transferase of Vibrio vulnificus (strain YJ016).